The following is a 69-amino-acid chain: DNA gyrase inhibitor YacG (69 aa).

Positions 7, 10, 26, and 30 each coordinate Zn(2+).

Belongs to the DNA gyrase inhibitor YacG family. In terms of assembly, interacts with GyrB. Requires Zn(2+) as cofactor.

In terms of biological role, inhibits all the catalytic activities of DNA gyrase by preventing its interaction with DNA. Acts by binding directly to the C-terminal domain of GyrB, which probably disrupts DNA binding by the gyrase. This is DNA gyrase inhibitor YacG from Shewanella baltica (strain OS195).